The following is a 529-amino-acid chain: MVLEYQQREGKGSSSKSMPPDSSSTTIHTCSEAQTGEDKGLLDPHLSVLELLSKTGHSPSPMGQNLVTSIDISGNHNVNDSISGSWQAIQPLDLGASFIPERCSSQTTNGSILSSSDTSEEEQELLQAPAADIINIIKQGQEGANVVSPSHPFKQLQKIISLPLPGKEKTPFNEQDDDGDEDEAFEEDSVTITKSLTSSTNSFVMPKLSLTQKNPVFRLLILGRTGSSFYQSIPKEYQSLFELPKYHDSATFPQYTGIVIIFQELREMVSLLNRIVQYSPGKPVIPICQPGQVIQVKNVLKSFLRNKLVKLLFPPVVVTNKRDLKKMFQRLQDLSLEYGEDVNEEDNDDEAIHTKSRSYCRNKKAENSKKKSPKSNKKPKRKKQKFFTSWFTWGISITIGISFGCCVTYFVTAAYEHQTVKSLSLRPSILASLLSLDSSSDTINTPATASPSSTEQFLWFDKGTLQINFHSDGFIMKSLTIIKETWGKMNTFVLHALSKPLKFLENLNKSSEFSIDESNRILALGYILL.

Residues 1–11 (MVLEYQQREGK) show a composition bias toward basic and acidic residues. The segment at 1–41 (MVLEYQQREGKGSSSKSMPPDSSSTTIHTCSEAQTGEDKGL) is disordered. The segment covering 12–24 (GSSSKSMPPDSSS) has biased composition (low complexity). Residues 25–34 (TTIHTCSEAQ) show a composition bias toward polar residues. 2 positions are modified to phosphoserine: S114 and S119. Positions 345 to 381 (EDNDDEAIHTKSRSYCRNKKAENSKKKSPKSNKKPKR) are disordered. Residues 370–381 (KKSPKSNKKPKR) are compositionally biased toward basic residues. A helical transmembrane segment spans residues 389-411 (SWFTWGISITIGISFGCCVTYFV).

It belongs to the ATG32 family. As to quaternary structure, interacts with ATG8 and ATG11. Post-translationally, phosphorylation of Ser-114 and Ser-119 are critically important for mitophagy and for the ATG11-ATG32 interaction. Phosphorylation depends on both HOG1 and PBS2.

The protein resides in the mitochondrion outer membrane. Its subcellular location is the vacuole membrane. It localises to the preautophagosomal structure membrane. Functionally, mitophagy-specific receptor that recruits the autophagic machinery to mitochondria and regulates selective degradation of mitochondria. Mitophagy contributes to regulate mitochondrial quantity and quality by eliminating the mitochondria to a basal level to fulfill cellular energy requirements and preventing excess ROS production. Recruits ATG11 to the surface of mitochondria. Also promotes autophagy-dependent peroxisome degradation. The chain is Autophagy-related protein 32 (ATG32) from Saccharomyces cerevisiae (strain RM11-1a) (Baker's yeast).